The primary structure comprises 139 residues: Ubiquitin-conjugating enzyme spm2 (139 aa).

The UBC core domain maps to 5-139; that stretch reads PRNFKLLEEL…PQPPEGSTFF (135 aa).

Belongs to the ubiquitin-conjugating enzyme family. As to quaternary structure, heterodimer with ubc13.

Functionally, has a role in the DNA error-free postreplication repair (PRR) pathway. Lacks catalytic activity by itself. The ubc13/spm2 heterodimer catalyzes the synthesis of non-canonical poly-ubiquitin chains that are linked through 'Lys-63'. This chain is Ubiquitin-conjugating enzyme spm2 (spm2), found in Schizosaccharomyces pombe (strain 972 / ATCC 24843) (Fission yeast).